Here is a 317-residue protein sequence, read N- to C-terminus: Putative peptide import ATP-binding protein BruAb2_0797 (317 aa).

The ABC transporter domain maps to 7-250 (LSVRGLAKHY…PQHPYTRALL (244 aa)). 43–50 (GESGSGKT) lines the ATP pocket.

Belongs to the ABC transporter superfamily. The complex is composed of two ATP-binding proteins (BruAb2_0796 and BruAb2_0797), two transmembrane proteins (BruAb2_0794) and a solute-binding protein (BruAb2_0792).

It is found in the cell inner membrane. Functionally, probably part of an ABC transporter complex that could be involved in peptide import. Probably responsible for energy coupling to the transport system. The protein is Putative peptide import ATP-binding protein BruAb2_0797 of Brucella abortus biovar 1 (strain 9-941).